The sequence spans 228 residues: Cytidylate kinase (228 aa).

An ATP-binding site is contributed by 10 to 18 (GPSGSGKGT).

This sequence belongs to the cytidylate kinase family. Type 1 subfamily.

The protein resides in the cytoplasm. The catalysed reaction is CMP + ATP = CDP + ADP. It catalyses the reaction dCMP + ATP = dCDP + ADP. The sequence is that of Cytidylate kinase from Acinetobacter baumannii (strain ACICU).